Reading from the N-terminus, the 226-residue chain is dITP/XTP pyrophosphatase (226 aa).

14–19 (TGNKDK) contacts substrate. E49 and D83 together coordinate Mg(2+). D83 functions as the Proton acceptor in the catalytic mechanism. Substrate-binding positions include T84, 176-179 (FGYD), K199, and 204-205 (HR).

The protein belongs to the HAM1 NTPase family. In terms of assembly, homodimer. Requires Mg(2+) as cofactor.

It catalyses the reaction XTP + H2O = XMP + diphosphate + H(+). The catalysed reaction is dITP + H2O = dIMP + diphosphate + H(+). It carries out the reaction ITP + H2O = IMP + diphosphate + H(+). Pyrophosphatase that catalyzes the hydrolysis of nucleoside triphosphates to their monophosphate derivatives, with a high preference for the non-canonical purine nucleotides XTP (xanthosine triphosphate), dITP (deoxyinosine triphosphate) and ITP. Seems to function as a house-cleaning enzyme that removes non-canonical purine nucleotides from the nucleotide pool, thus preventing their incorporation into DNA/RNA and avoiding chromosomal lesions. The sequence is that of dITP/XTP pyrophosphatase from Chlorobaculum tepidum (strain ATCC 49652 / DSM 12025 / NBRC 103806 / TLS) (Chlorobium tepidum).